The sequence spans 804 residues: Ribonucleoside-diphosphate reductase large subunit-like protein (804 aa).

Belongs to the ribonucleoside diphosphate reductase large chain family. As to quaternary structure, the genome of human herpesvirus-6 does not code for a ribonucleotide reductase small subunit.

The protein localises to the virion. The protein resides in the host cytoplasm. Does not possess a ribonucleotide reductase activity. Betaherpesviruses probably use another strategy to expand the dNTP pool in a quiescent host cell. The protein is Ribonucleoside-diphosphate reductase large subunit-like protein of Human herpesvirus 6B (strain Z29) (HHV-6 variant B).